The following is a 384-amino-acid chain: DNA dC-&gt;dU-editing enzyme APOBEC-3G (384 aa).

Residues 1 to 60 are essential for cytoplasmic localization; the sequence is MKPHFRNPVERMYQDTFSDNFYNRPILSRRNTVWLCYEVKTKGPSRPPLDAKIFRGQVYS. 2 consecutive CMP/dCMP-type deaminase domains span residues 29 to 138 and 214 to 328; these read RRNT…LRSL and GRHE…LRTL. T32 bears the Phosphothreonine; by PKA mark. 3 residues coordinate Zn(2+): H65, C97, and C100. Residues 209–336 form a necessary for homooligomerization region; the sequence is ELWVRGRHET…TLAKAGAEIS (128 aa). Positions 213-215 are interaction with DNA; sequence RGR. A Phosphothreonine; by PKA and CAMK2 modification is found at T218. H257 contacts Zn(2+). Residue E259 is the Proton donor of the active site. Zn(2+) is bound by residues C288 and C291. The segment at 313–320 is interaction with DNA; sequence RIYDDQGR.

Belongs to the cytidine and deoxycytidylate deaminase family. Homodimer. Homooligomer. Can bind RNA to form ribonucleoprotein complexes of high-molecular-mass (HMM) or low-molecular-mass (LMM). HMM is inactive and heterogeneous in protein composition because of binding nonselectively to cellular RNAs, which in turn are associated with variety of cellular proteins. The LMM form which is enzymatically active has few or no RNAs associated. Its ability to form homooligomer is distinct from its ability to assemble into HMM. Interacts with APOBEC3B, APOBEC3F, MOV10, AGO2, EIF4E, EIF4ENIF1, DCP2 and DDX6 in an RNA-dependent manner. Interacts with AGO1, AGO3 and PKA/PRKACA. Zn(2+) is required as a cofactor.

The protein resides in the cytoplasm. It localises to the nucleus. Its subcellular location is the P-body. The enzyme catalyses a 2'-deoxycytidine in single-stranded DNA + H2O + H(+) = a 2'-deoxyuridine in single-stranded DNA + NH4(+). DNA deaminase (cytidine deaminase) which acts as an inhibitor of retrovirus replication and retrotransposon mobility via deaminase-dependent and -independent mechanisms. After the penetration of retroviral nucleocapsids into target cells of infection and the initiation of reverse transcription, it can induce the conversion of cytosine to uracil in the minus-sense single-strand viral DNA, leading to G-to-A hypermutations in the subsequent plus-strand viral DNA. The resultant detrimental levels of mutations in the proviral genome, along with a deamination-independent mechanism that works prior to the proviral integration, together exert efficient antiretroviral effects in infected target cells. Selectively targets single-stranded DNA and does not deaminate double-stranded DNA or single- or double-stranded RNA. May inhibit the mobility of LTR retrotransposons. This is DNA dC-&gt;dU-editing enzyme APOBEC-3G (APOBEC3G) from Pan paniscus (Pygmy chimpanzee).